Here is a 696-residue protein sequence, read N- to C-terminus: Caprolactamase subunit alpha (696 aa).

Belongs to the HyuA family. The caprolactamase is a heterotetramer composed of two alpha subunits (CapA) and two beta subunits (CapB).

Activity is dependent on the presence of ATP and bicarbonate. The requirement for bicarbonate may be related to allosteric activation through conformational effects, but it is also conceivable that carboxyphosphate is formed and acts as a mediator in caprolactam activation, forming carboxy- or phospholactim. Functionally, component of a caprolactamase involved in the degradation of caprolactam, an industrial compound mainly used in the production of Nylon 6. Catalyzes the ATP-dependent hydrolysis of the caprolactam ring to form 6-aminocaproic acid (6-ACA). The alpha subunit is responsible for ATP-dependent substrate phosphorylation. The enzyme cannot use 5-oxoproline. This Pseudomonas jessenii protein is Caprolactamase subunit alpha.